The chain runs to 417 residues: Serine protease hepsin (417 aa).

The Cytoplasmic portion of the chain corresponds to 1–23 (MAQKEGGRTVPCCSRPKVAALTA). The chain crosses the membrane as a helical; Signal-anchor for type II membrane protein span at residues 24–44 (GTLLLLTAIGAASWAIVAVLL). Topologically, residues 45–417 (RSDQEPLYPV…SEASGMVTQL (373 aa)) are extracellular. Residues 54-151 (VQVSSADARL…RGRFLATICQ (98 aa)) enclose the SRCR domain. Intrachain disulfides connect Cys77-Cys140, Cys90-Cys150, Cys119-Cys138, Cys153-Cys277, Cys188-Cys204, Cys291-Cys359, Cys322-Cys338, and Cys349-Cys381. Residue Asn112 is glycosylated (N-linked (GlcNAc...) asparagine). One can recognise a Peptidase S1 domain in the interval 163-405 (IVGGRDTSLG…FREWIFQAIK (243 aa)). Residues His203 and Asp257 each act as charge relay system in the active site. Ser353 serves as the catalytic Charge relay system.

It belongs to the peptidase S1 family.

It is found in the membrane. The enzyme catalyses Cleavage after basic amino-acid residues, with Arg strongly preferred to Lys.. In terms of biological role, plays an essential role in cell growth and maintenance of cell morphology. May mediate the activating cleavage of HGF and MST1/HGFL. Plays a role in the proteolytic processing of ACE2. The sequence is that of Serine protease hepsin (HPN) from Pongo abelii (Sumatran orangutan).